A 652-amino-acid polypeptide reads, in one-letter code: Acetyl-coenzyme A synthetase (652 aa).

CoA-binding positions include 191–194, T311, and N335; that span reads RAGR. ATP is bound by residues 387 to 389, 411 to 416, D500, and R515; these read GEP and DTWWQT. A CoA-binding site is contributed by S523. R526 contacts ATP. Residues V537, H539, and I542 each coordinate Mg(2+). R584 contacts CoA. The residue at position 609 (K609) is an N6-acetyllysine.

It belongs to the ATP-dependent AMP-binding enzyme family. It depends on Mg(2+) as a cofactor. Post-translationally, acetylated. Deacetylation by the SIR2-homolog deacetylase activates the enzyme.

The catalysed reaction is acetate + ATP + CoA = acetyl-CoA + AMP + diphosphate. Catalyzes the conversion of acetate into acetyl-CoA (AcCoA), an essential intermediate at the junction of anabolic and catabolic pathways. Acs undergoes a two-step reaction. In the first half reaction, Acs combines acetate with ATP to form acetyl-adenylate (AcAMP) intermediate. In the second half reaction, it can then transfer the acetyl group from AcAMP to the sulfhydryl group of CoA, forming the product AcCoA. Its function is as follows. Enables the cell to use acetate during aerobic growth to generate energy via the TCA cycle, and biosynthetic compounds via the glyoxylate shunt. Acetylates CheY, the response regulator involved in flagellar movement and chemotaxis. The sequence is that of Acetyl-coenzyme A synthetase from Escherichia coli O6:H1 (strain CFT073 / ATCC 700928 / UPEC).